We begin with the raw amino-acid sequence, 1233 residues long: uncharacterized protein (1233 aa).

7 disordered regions span residues 1–39, 65–116, 160–211, 250–577, 594–825, 851–872, and 902–955; these read MVES…PSTN, QELS…DAIS, AEGT…TDLS, EKMD…DAPR, DLEV…NSEK, NKEN…NSEK, and EDVE…ENSK. The span at 72–83 shows a compositional bias: basic residues; it reads KSSKLKGHKKKN. Residue Ser180 is modified to Phosphoserine. Basic residues predominate over residues 183–199; that stretch reads TRRKKNKKKKTTNRRGR. Residues 201 to 211 show a composition bias toward polar residues; that stretch reads SSNPADTTDLS. Composition is skewed to basic and acidic residues over residues 250 to 280 and 287 to 300; these read EKMD…ETSS and NEEK…REEN. The segment covering 329-345 has biased composition (polar residues); the sequence is GQASTKDVESESLTKNG. 2 stretches are compositionally biased toward basic and acidic residues: residues 349–370 and 379–408; these read KENE…DRDG and NQKE…ELSV. Over residues 409–422 the composition is skewed to polar residues; it reads NHENNMSHNFNAAG. Ser462 carries the post-translational modification Phosphoserine. Over residues 466-478 the composition is skewed to acidic residues; it reads EKEEEEEEEEEEN. Basic and acidic residues-rich tracts occupy residues 484-497, 508-527, 594-622, 631-672, and 684-711; these read VKKE…EAVR, STSK…EAGE, DLEV…DKIA, EDMK…KTPE, and RPED…DVKP. Ser523 carries the post-translational modification Phosphoserine. Residues 728–739 show a composition bias toward polar residues; sequence QRVQISTEQAET. Positions 753-783 are enriched in basic and acidic residues; that stretch reads FKEEEKPKRFEITQEGDKITGKDTNHEHGEA. The segment covering 855 to 868 has biased composition (acidic residues); it reads EDVEVDTEEDAEVE. A Phosphothreonine modification is found at Thr861. 2 stretches are compositionally biased toward basic and acidic residues: residues 910–920 and 935–948; these read SKEDIETKCSE and EVSK…TKED. A Phosphoserine modification is found at Ser975. 2 disordered regions span residues 984-1071 and 1109-1128; these read LPEL…PKKA and KDST…KPQD. Over residues 986 to 999 the composition is skewed to basic and acidic residues; the sequence is ELEKQDIKDNKGED. Phosphoserine occurs at positions 1037 and 1046. Basic and acidic residues-rich tracts occupy residues 1062–1071 and 1118–1127; these read QSTRENPKKA and QSKKNNDKPQ. One can recognise a Glutaredoxin domain in the interval 1132–1233; sequence TSEIRKLNEK…KLRELIYDTI (102 aa).

This is an uncharacterized protein from Saccharomyces cerevisiae (strain ATCC 204508 / S288c) (Baker's yeast).